Here is a 341-residue protein sequence, read N- to C-terminus: Anthranilate phosphoribosyltransferase (341 aa).

5-phospho-alpha-D-ribose 1-diphosphate-binding positions include Gly-79, 82 to 83, Thr-87, 89 to 92, 107 to 115, and Ser-119; these read GD, NIST, and KHGNRAVSS. Residue Gly-79 participates in anthranilate binding. Ser-91 serves as a coordination point for Mg(2+). Asn-110 is a binding site for anthranilate. Arg-165 lines the anthranilate pocket. Mg(2+) contacts are provided by Asp-224 and Glu-225.

The protein belongs to the anthranilate phosphoribosyltransferase family. As to quaternary structure, homodimer. Mg(2+) serves as cofactor.

The catalysed reaction is N-(5-phospho-beta-D-ribosyl)anthranilate + diphosphate = 5-phospho-alpha-D-ribose 1-diphosphate + anthranilate. The protein operates within amino-acid biosynthesis; L-tryptophan biosynthesis; L-tryptophan from chorismate: step 2/5. Functionally, catalyzes the transfer of the phosphoribosyl group of 5-phosphorylribose-1-pyrophosphate (PRPP) to anthranilate to yield N-(5'-phosphoribosyl)-anthranilate (PRA). In Bacillus cereus (strain AH820), this protein is Anthranilate phosphoribosyltransferase.